Here is a 446-residue protein sequence, read N- to C-terminus: Probable D-serine dehydratase (446 aa).

Position 118 is an N6-(pyridoxal phosphate)lysine (Lys118).

Belongs to the serine/threonine dehydratase family. DsdA subfamily. It depends on pyridoxal 5'-phosphate as a cofactor.

It catalyses the reaction D-serine = pyruvate + NH4(+). This Ectopseudomonas mendocina (strain ymp) (Pseudomonas mendocina) protein is Probable D-serine dehydratase.